The primary structure comprises 57 residues: uncharacterized protein (57 aa).

This is an uncharacterized protein from Methanocaldococcus jannaschii (strain ATCC 43067 / DSM 2661 / JAL-1 / JCM 10045 / NBRC 100440) (Methanococcus jannaschii).